We begin with the raw amino-acid sequence, 467 residues long: Asparagine--tRNA ligase (467 aa).

Belongs to the class-II aminoacyl-tRNA synthetase family. Homodimer.

The protein localises to the cytoplasm. The enzyme catalyses tRNA(Asn) + L-asparagine + ATP = L-asparaginyl-tRNA(Asn) + AMP + diphosphate + H(+). This chain is Asparagine--tRNA ligase, found in Actinobacillus succinogenes (strain ATCC 55618 / DSM 22257 / CCUG 43843 / 130Z).